Consider the following 352-residue polypeptide: C-C chemokine receptor type 5 (352 aa).

The Extracellular portion of the chain corresponds to 1-30; it reads MDYQVSSPTYDIDYYTSEPCQKIKVKQIAA. At Tyr3 the chain carries Sulfotyrosine. Residues Ser6 and Ser7 are each glycosylated (O-linked (GalNAc...) serine). Sulfotyrosine is present on residues Tyr10, Tyr14, and Tyr15. 2 cysteine pairs are disulfide-bonded: Cys20–Cys269 and Cys101–Cys178. A helical membrane pass occupies residues 31–58; it reads RLLPPLYSLVFIFGFVGNILVVLILINC. Topologically, residues 59–68 are cytoplasmic; sequence KRLKSMTDIY. The chain crosses the membrane as a helical span at residues 69–89; sequence LLNLAISDLLFLLTVPFWAHY. The Extracellular portion of the chain corresponds to 90-102; that stretch reads AAAQWDFGNTMCQ. A helical transmembrane segment spans residues 103 to 124; it reads LLTGLYFIGFFSGIFFIILLTI. Topologically, residues 125-141 are cytoplasmic; the sequence is DRYLAIVHAVFALKART. The helical transmembrane segment at 142–166 threads the bilayer; sequence VTFGVVTSVITWVVAVFASLPRIIF. Topologically, residues 167 to 198 are extracellular; the sequence is TRSQREGLHYTCSSHFPYSQYQFWKNFQTLKI. The chain crosses the membrane as a helical span at residues 199–218; it reads VILGLVLPLLVMVICYSGIL. Residues 219-235 lie on the Cytoplasmic side of the membrane; the sequence is KTLLRCRNDKKRHRAVR. A helical membrane pass occupies residues 236–260; it reads LIFTIMIVYFLFWAPYNIVLLLNTF. Over 261 to 277 the chain is Extracellular; that stretch reads QEFFGLNNCSSSNRLDQ. The chain crosses the membrane as a helical span at residues 278 to 301; the sequence is AMQVTETLGMTHCCINPIIYAFVG. At 302 to 352 the chain is on the cytoplasmic side; the sequence is EKFRNYLLVFFQKHIAKRFCKCCSIFQQDAPERASSVYTRSTGEQETSVGL. 3 S-palmitoyl cysteine lipidation sites follow: Cys321, Cys323, and Cys324. Ser336, Ser337, Ser342, and Ser349 each carry phosphoserine; by BARK1.

This sequence belongs to the G-protein coupled receptor 1 family. Interacts with PRAF2. Efficient ligand binding to CCL3/MIP-1alpha and CCL4/MIP-1beta requires sulfation, O-glycosylation and sialic acid modifications. Glycosylation on Ser-6 is required for efficient binding of CCL4. Interacts with GRK2. Interacts with ARRB1 and ARRB2. Interacts with CNIH4. Interacts with S100A4; this interaction stimulates T-lymphocyte chemotaxis. Post-translationally, sulfated on at least 2 of the N-terminal tyrosines. Sulfation is required for efficient binding of the chemokines, CCL3 and CCL4. Palmitoylation in the C-terminal is important for cell surface expression. In terms of processing, phosphorylation on serine residues in the C-terminal is stimulated by binding CC chemokines especially by APO-RANTES. Post-translationally, O-glycosylated, but not N-glycosylated. Ser-6 appears to be the major site even if Ser-7 may be also O-glycosylated. Also sialylated glycans present which contribute to chemokine binding. Thr-16 and Ser-17 may also be glycosylated and, if so, with small moieties such as a T-antigen.

It is found in the cell membrane. Functionally, receptor for a number of inflammatory CC-chemokines including CCL3/MIP-1-alpha, CCL4/MIP-1-beta and RANTES and subsequently transduces a signal by increasing the intracellular calcium ion level. May play a role in the control of granulocytic lineage proliferation or differentiation. Participates in T-lymphocyte migration to the infection site by acting as a chemotactic receptor. The sequence is that of C-C chemokine receptor type 5 (CCR5) from Chlorocebus sabaeus (Green monkey).